The chain runs to 303 residues: NAD kinase (303 aa).

Asp71 serves as the catalytic Proton acceptor. NAD(+) is bound by residues Asp71–Gly72, Asn145–Asp146, Arg156, Arg173, Asp175, Thr186–Ser191, and Gln245.

Belongs to the NAD kinase family. A divalent metal cation serves as cofactor.

Its subcellular location is the cytoplasm. It carries out the reaction NAD(+) + ATP = ADP + NADP(+) + H(+). Involved in the regulation of the intracellular balance of NAD and NADP, and is a key enzyme in the biosynthesis of NADP. Catalyzes specifically the phosphorylation on 2'-hydroxyl of the adenosine moiety of NAD to yield NADP. The polypeptide is NAD kinase (Magnetococcus marinus (strain ATCC BAA-1437 / JCM 17883 / MC-1)).